Consider the following 747-residue polypeptide: ESX-1 secretion system protein EccCa1 (747 aa).

A run of 3 helical transmembrane segments spans residues 41 to 61 (ILPYVMGGAMLGMIAIMVAGG), 65 to 85 (LSPYMLMMPLMMIVMMVGGLA), and 222 to 242 (FPTIAIGGDLAGAAGLMTAMI). The FtsK domain occupies 456-665 (GNVMYLDIKE…LRTTSSHESK (210 aa)). 479–486 (GTTGSGKS) provides a ligand contact to ATP.

As to quaternary structure, part of the ESX-1 / type VII secretion system (T7SS), which is composed of cytosolic and membrane components. The ESX-1 membrane complex is composed of EccB1, EccCa1, EccCb1, EccD1 and EccE1.

It is found in the cell inner membrane. Its function is as follows. Part of the ESX-1 specialized secretion system, which delivers several virulence factors to host cells during infection, including the key virulence factors EsxA (ESAT-6) and EsxB (CFP-10). The sequence is that of ESX-1 secretion system protein EccCa1 from Mycobacterium tuberculosis (strain CDC 1551 / Oshkosh).